A 110-amino-acid polypeptide reads, in one-letter code: UPF0060 membrane protein Bcep18194_A4425 (110 aa).

The next 4 membrane-spanning stretches (helical) occupy residues 9–29 (ALFA…WLVL), 34–54 (PVWL…LLTL), 66–86 (YGGV…GVAL), and 88–108 (RWDV…ALQP).

Belongs to the UPF0060 family.

The protein localises to the cell inner membrane. The chain is UPF0060 membrane protein Bcep18194_A4425 from Burkholderia lata (strain ATCC 17760 / DSM 23089 / LMG 22485 / NCIMB 9086 / R18194 / 383).